We begin with the raw amino-acid sequence, 248 residues long: tRNA1(Val) (adenine(37)-N6)-methyltransferase (248 aa).

This sequence belongs to the methyltransferase superfamily. tRNA (adenine-N(6)-)-methyltransferase family.

The protein resides in the cytoplasm. It carries out the reaction adenosine(37) in tRNA1(Val) + S-adenosyl-L-methionine = N(6)-methyladenosine(37) in tRNA1(Val) + S-adenosyl-L-homocysteine + H(+). Functionally, specifically methylates the adenine in position 37 of tRNA(1)(Val) (anticodon cmo5UAC). The polypeptide is tRNA1(Val) (adenine(37)-N6)-methyltransferase (Yersinia pseudotuberculosis serotype O:1b (strain IP 31758)).